The primary structure comprises 277 residues: Phosphatidylglycerol--prolipoprotein diacylglyceryl transferase (277 aa).

Helical transmembrane passes span 15 to 35 (IHVR…TFMS), 50 to 70 (IDLL…YYVI), 89 to 109 (GGIA…VFCY), and 112 to 132 (FLPP…AQVL). Residue R134 coordinates a 1,2-diacyl-sn-glycero-3-phospho-(1'-sn-glycerol). Helical transmembrane passes span 174–194 (KPTF…ILSL), 204–224 (GEVF…VEGM), and 234–254 (VIRV…ILFV).

The protein belongs to the Lgt family.

Its subcellular location is the cell membrane. The catalysed reaction is L-cysteinyl-[prolipoprotein] + a 1,2-diacyl-sn-glycero-3-phospho-(1'-sn-glycerol) = an S-1,2-diacyl-sn-glyceryl-L-cysteinyl-[prolipoprotein] + sn-glycerol 1-phosphate + H(+). Its pathway is protein modification; lipoprotein biosynthesis (diacylglyceryl transfer). Its function is as follows. Catalyzes the transfer of the diacylglyceryl group from phosphatidylglycerol to the sulfhydryl group of the N-terminal cysteine of a prolipoprotein, the first step in the formation of mature lipoproteins. This Lactobacillus delbrueckii subsp. bulgaricus (strain ATCC 11842 / DSM 20081 / BCRC 10696 / JCM 1002 / NBRC 13953 / NCIMB 11778 / NCTC 12712 / WDCM 00102 / Lb 14) protein is Phosphatidylglycerol--prolipoprotein diacylglyceryl transferase.